Reading from the N-terminus, the 201-residue chain is 3-isopropylmalate dehydratase small subunit (201 aa).

It belongs to the LeuD family. LeuD type 1 subfamily. As to quaternary structure, heterodimer of LeuC and LeuD.

The catalysed reaction is (2R,3S)-3-isopropylmalate = (2S)-2-isopropylmalate. It participates in amino-acid biosynthesis; L-leucine biosynthesis; L-leucine from 3-methyl-2-oxobutanoate: step 2/4. Catalyzes the isomerization between 2-isopropylmalate and 3-isopropylmalate, via the formation of 2-isopropylmaleate. The chain is 3-isopropylmalate dehydratase small subunit from Shewanella sp. (strain MR-7).